We begin with the raw amino-acid sequence, 282 residues long: Probable endonuclease 4 (282 aa).

Zn(2+)-binding residues include His-69, His-109, Glu-145, Asp-179, His-182, His-216, Asp-229, His-231, and Glu-261.

The protein belongs to the AP endonuclease 2 family. Zn(2+) serves as cofactor.

The enzyme catalyses Endonucleolytic cleavage to 5'-phosphooligonucleotide end-products.. Functionally, endonuclease IV plays a role in DNA repair. It cleaves phosphodiester bonds at apurinic or apyrimidinic (AP) sites, generating a 3'-hydroxyl group and a 5'-terminal sugar phosphate. The protein is Probable endonuclease 4 of Edwardsiella ictaluri (strain 93-146).